A 288-amino-acid chain; its full sequence is tRNA dimethylallyltransferase (288 aa).

17–24 contributes to the ATP binding site; that stretch reads GPTASGKT. 19-24 is a binding site for substrate; sequence TASGKT.

The protein belongs to the IPP transferase family. In terms of assembly, monomer. Mg(2+) is required as a cofactor.

The catalysed reaction is adenosine(37) in tRNA + dimethylallyl diphosphate = N(6)-dimethylallyladenosine(37) in tRNA + diphosphate. Functionally, catalyzes the transfer of a dimethylallyl group onto the adenine at position 37 in tRNAs that read codons beginning with uridine, leading to the formation of N6-(dimethylallyl)adenosine (i(6)A). In Jannaschia sp. (strain CCS1), this protein is tRNA dimethylallyltransferase.